Here is a 174-residue protein sequence, read N- to C-terminus: Endoribonuclease YbeY (174 aa).

Positions 129, 133, and 139 each coordinate Zn(2+).

It belongs to the endoribonuclease YbeY family. The cofactor is Zn(2+).

The protein localises to the cytoplasm. Functionally, single strand-specific metallo-endoribonuclease involved in late-stage 70S ribosome quality control and in maturation of the 3' terminus of the 16S rRNA. The chain is Endoribonuclease YbeY from Lactobacillus acidophilus (strain ATCC 700396 / NCK56 / N2 / NCFM).